Consider the following 434-residue polypeptide: 3-phosphoshikimate 1-carboxyvinyltransferase (434 aa).

Residues Lys-15, Ser-16, and Arg-20 each coordinate 3-phosphoshikimate. Position 15 (Lys-15) interacts with phosphoenolpyruvate. Positions 96 and 124 each coordinate phosphoenolpyruvate. Ser-169, Gln-171, Ser-195, Asp-319, and Lys-346 together coordinate 3-phosphoshikimate. Residue Gln-171 coordinates phosphoenolpyruvate. Catalysis depends on Asp-319, which acts as the Proton acceptor. Phosphoenolpyruvate-binding residues include Arg-350 and Arg-394.

It belongs to the EPSP synthase family. As to quaternary structure, monomer.

Its subcellular location is the cytoplasm. The enzyme catalyses 3-phosphoshikimate + phosphoenolpyruvate = 5-O-(1-carboxyvinyl)-3-phosphoshikimate + phosphate. Its pathway is metabolic intermediate biosynthesis; chorismate biosynthesis; chorismate from D-erythrose 4-phosphate and phosphoenolpyruvate: step 6/7. In terms of biological role, catalyzes the transfer of the enolpyruvyl moiety of phosphoenolpyruvate (PEP) to the 5-hydroxyl of shikimate-3-phosphate (S3P) to produce enolpyruvyl shikimate-3-phosphate and inorganic phosphate. The chain is 3-phosphoshikimate 1-carboxyvinyltransferase from Chlorobaculum parvum (strain DSM 263 / NCIMB 8327) (Chlorobium vibrioforme subsp. thiosulfatophilum).